The chain runs to 224 residues: Redox-sensing transcriptional repressor Rex (224 aa).

The H-T-H motif DNA-binding region spans 17–56 (RYHRYLEELLKNDVKRISSRELSEKMGVTASQIRQDLNNF). 91 to 96 (GAGNLG) is an NAD(+) binding site.

The protein belongs to the transcriptional regulatory Rex family. In terms of assembly, homodimer.

It localises to the cytoplasm. Functionally, modulates transcription in response to changes in cellular NADH/NAD(+) redox state. The protein is Redox-sensing transcriptional repressor Rex of Thermoanaerobacter pseudethanolicus (strain ATCC 33223 / 39E) (Clostridium thermohydrosulfuricum).